The primary structure comprises 127 residues: Small ribosomal subunit protein uS11 (127 aa).

It belongs to the universal ribosomal protein uS11 family. As to quaternary structure, part of the 30S ribosomal subunit. Interacts with proteins S7 and S18. Binds to IF-3.

Its function is as follows. Located on the platform of the 30S subunit, it bridges several disparate RNA helices of the 16S rRNA. Forms part of the Shine-Dalgarno cleft in the 70S ribosome. The sequence is that of Small ribosomal subunit protein uS11 from Chlorobium phaeobacteroides (strain BS1).